A 346-amino-acid polypeptide reads, in one-letter code: Zinc finger CCCH domain-containing protein 28 (346 aa).

The tract at residues 1-99 (MASAETPNPD…SPRYPDGKRR (99 aa)) is disordered. Positions 17–41 (DAAAAADPAAAAPAAAATDPAAAGS) are enriched in low complexity. The span at 62 to 86 (RSSRSRSRSPRRGRSRSRSRSRSRG) shows a compositional bias: basic residues. 6 C3H1-type zinc fingers span residues 103-131 (DLNVEVCRDFLRDRCARADIECKYAHPHP), 138-165 (DSKVTACADSLRNNCFRGRTCRYYHPPP), 181-209 (KVKMQVCRDFTRGRCSRSANECRFLHHSP), 211-237 (EDCAIVCQDFLRGRCDRKSCRYSHVMA), 282-308 (NYGVEVCRDYLKNMCNRESCRFAHPDL), and 314-340 (NTQVEVCRDFKRGECNRPACRFYHPPA).

The sequence is that of Zinc finger CCCH domain-containing protein 28 from Oryza sativa subsp. japonica (Rice).